The primary structure comprises 236 residues: Uridylate kinase (236 aa).

K10–G13 contributes to the ATP binding site. G52 is a UMP binding site. The ATP site is built by G53 and R57. UMP contacts are provided by residues D72 and T133–T140. Residues T160, Y166, and D169 each contribute to the ATP site.

It belongs to the UMP kinase family. Homohexamer.

It is found in the cytoplasm. It carries out the reaction UMP + ATP = UDP + ADP. It functions in the pathway pyrimidine metabolism; CTP biosynthesis via de novo pathway; UDP from UMP (UMPK route): step 1/1. Inhibited by UTP. In terms of biological role, catalyzes the reversible phosphorylation of UMP to UDP. The polypeptide is Uridylate kinase (Cupriavidus metallidurans (strain ATCC 43123 / DSM 2839 / NBRC 102507 / CH34) (Ralstonia metallidurans)).